The chain runs to 237 residues: Large ribosomal subunit protein uL1 (237 aa).

Belongs to the universal ribosomal protein uL1 family. Part of the 50S ribosomal subunit.

Its function is as follows. Binds directly to 23S rRNA. The L1 stalk is quite mobile in the ribosome, and is involved in E site tRNA release. Protein L1 is also a translational repressor protein, it controls the translation of the L11 operon by binding to its mRNA. This chain is Large ribosomal subunit protein uL1, found in Rickettsia typhi (strain ATCC VR-144 / Wilmington).